Consider the following 118-residue polypeptide: Large ribosomal subunit protein bL20 (118 aa).

Belongs to the bacterial ribosomal protein bL20 family.

In terms of biological role, binds directly to 23S ribosomal RNA and is necessary for the in vitro assembly process of the 50S ribosomal subunit. It is not involved in the protein synthesizing functions of that subunit. The sequence is that of Large ribosomal subunit protein bL20 from Lactobacillus delbrueckii subsp. bulgaricus (strain ATCC BAA-365 / Lb-18).